The following is a 254-amino-acid chain: Probable membrane transporter protein YjnA (254 aa).

The next 6 membrane-spanning stretches (helical) occupy residues 5–25, 75–95, 105–125, 143–163, 187–207, and 209–229; these read IILMGLFVGALVGLTGVGGAA, AIGSIPSASLAIGILHLFPAF, HALGYVLTLVAISIIVRLFLD, ALTILIGVVFGFIVGLTSIGS, IAHAFLLVTAAGILNASFGSV, and YMLAANLLLGSIPGVLIGSHL.

The protein belongs to the 4-toluene sulfonate uptake permease (TSUP) (TC 2.A.102) family.

It is found in the cell membrane. The polypeptide is Probable membrane transporter protein YjnA (yjnA) (Bacillus subtilis (strain 168)).